Reading from the N-terminus, the 110-residue chain is Phosphoribosyl-ATP pyrophosphatase (110 aa).

The protein belongs to the PRA-PH family.

Its subcellular location is the cytoplasm. It catalyses the reaction 1-(5-phospho-beta-D-ribosyl)-ATP + H2O = 1-(5-phospho-beta-D-ribosyl)-5'-AMP + diphosphate + H(+). It participates in amino-acid biosynthesis; L-histidine biosynthesis; L-histidine from 5-phospho-alpha-D-ribose 1-diphosphate: step 2/9. The chain is Phosphoribosyl-ATP pyrophosphatase from Pseudomonas savastanoi pv. phaseolicola (strain 1448A / Race 6) (Pseudomonas syringae pv. phaseolicola (strain 1448A / Race 6)).